Consider the following 1678-residue polypeptide: Hispidin synthase (1678 aa).

An adenylation (A) domain region spans residues 33–453 (GEHRWSYREL…WLGRNTDFIQ (421 aa)). A Carrier 1 domain is found at 586–661 (DELSNTVKHI…SLSNAVYAKL (76 aa)). Residue S620 is modified to O-(pantetheine 4'-phosphoryl)serine. One can recognise a Ketosynthase family 3 (KS3) domain in the interval 683–1108 (GKEIVVVGQA…GTLGGIVLEA (426 aa)). Active-site for beta-ketoacyl synthase activity residues include C852, H988, and H1029. Positions 1201-1499 (YKRGALAFAF…VAWSLLLSNG (299 aa)) are malonyl-CoA:ACP transacylase (MAT) domain. Positions 1562–1582 (EETLSSGSSTPTLENTDLDSG) are disordered. Over residues 1564–1576 (TLSSGSSTPTLEN) the composition is skewed to polar residues. The Carrier 2 domain maps to 1597 to 1672 (DDLRDSIVSS…EMVSNLVEQA (76 aa)). O-(pantetheine 4'-phosphoryl)serine is present on S1632.

The protein in the N-terminal section; belongs to the NRP synthetase family.

It catalyses the reaction (E)-caffeate + 2 malonyl-CoA + ATP + H(+) = hispidin + AMP + 2 CO2 + diphosphate + 2 CoA. It participates in secondary metabolite biosynthesis. In terms of biological role, PKS-NRPS hybrid synthetase; part of the gene cluster that mediates the fungal bioluminescence cycle. Performs the biosynthesis of hispidin from caffeic acid by two cycles of addition of malonyl units followed by lactonization. The fungal bioluminescence cycle begins with the hispidin synthetase that catalyzes the formation of hispidin which is further hydroxylated by the hispidin-3-hydroxylase, yielding the fungal luciferin 3-hydroxyhispidin. The luciferase then produces an endoperoxide as a high-energy intermediate with decomposition that yields oxyluciferin (also known as caffeoylpyruvate) and light emission. Oxyluciferin can be recycled to caffeic acid by caffeoylpyruvate hydrolase. This chain is Hispidin synthase, found in Neonothopanus nambi (Agaricus nambi).